A 349-amino-acid polypeptide reads, in one-letter code: Twinfilin-2-A (349 aa).

ADF-H domains are found at residues 4 to 139 (QTGI…KHVS) and 177 to 313 (GLSF…DEVH). A disordered region spans residues 321 to 349 (QAFAKPKGPAGKRGQKRLIKGPGENGEDS).

It belongs to the actin-binding proteins ADF family. Twinfilin subfamily. As to quaternary structure, interacts with G-actin; ADP-actin form and capping protein (CP).

Its subcellular location is the cytoplasm. The protein resides in the cytoskeleton. The protein localises to the perinuclear region. Its function is as follows. Actin-binding protein involved in motile and morphological processes. Inhibits actin polymerization, likely by sequestering G-actin. The polypeptide is Twinfilin-2-A (twf2-a) (Xenopus laevis (African clawed frog)).